Reading from the N-terminus, the 463-residue chain is Retinoic acid receptor RXR-gamma (463 aa).

The interval 1-138 is modulating; that stretch reads MYGNYSHFMK…TSPGSLVKHI (138 aa). The tract at residues 16–53 is disordered; sequence GGSPGHTGSTSMSPSVALPTGKPMDSHPSYTDTPVSAP. 2 NR C4-type zinc fingers span residues 139–159 and 175–199; these read CAICGDRSSGKHYGVYSCEGC and CRDNKDCLIDKRQRNRCQYCRYQKC. Residues 139–204 constitute a DNA-binding region (nuclear receptor); the sequence is CAICGDRSSG…RYQKCLVMGM (66 aa). The hinge stretch occupies residues 205 to 230; it reads KREAVQEERQRSRERAESEAECASTG. The NR LBD domain maps to 231–459; that stretch reads HEDMPVERIL…TFLMEMLETP (229 aa).

The protein belongs to the nuclear hormone receptor family. NR2 subfamily. Homodimer. Heterodimer with a RAR molecule. Binds DNA preferentially as a RAR/RXR heterodimer. Interacts with RARA. Post-translationally, acetylated by EP300. In terms of tissue distribution, expressed in the liver, but not detected in the adrenal gland (at protein level). Restricted expression in adrenal gland, kidney, liver, brain and lungs. Strong expression in heart and muscles.

It localises to the nucleus. It is found in the cytoplasm. Functionally, receptor for retinoic acid. Retinoic acid receptors bind as heterodimers to their target response elements in response to their ligands, all-trans or 9-cis retinoic acid, and regulate gene expression in various biological processes. The RAR/RXR heterodimers bind to the retinoic acid response elements (RARE) composed of tandem 5'-AGGTCA-3' sites known as DR1-DR5. The high affinity ligand for RXRs is 9-cis retinoic acid. In Rattus norvegicus (Rat), this protein is Retinoic acid receptor RXR-gamma (Rxrg).